The following is a 242-amino-acid chain: Proteasome subunit alpha (242 aa).

Belongs to the peptidase T1A family. The 20S proteasome core is composed of 14 alpha and 14 beta subunits that assemble into four stacked heptameric rings, resulting in a barrel-shaped structure. The two inner rings, each composed of seven catalytic beta subunits, are sandwiched by two outer rings, each composed of seven alpha subunits. The catalytic chamber with the active sites is on the inside of the barrel. Has a gated structure, the ends of the cylinder being occluded by the N-termini of the alpha-subunits. Is capped by the proteasome-associated ATPase, ARC.

The protein resides in the cytoplasm. The protein operates within protein degradation; proteasomal Pup-dependent pathway. The formation of the proteasomal ATPase ARC-20S proteasome complex, likely via the docking of the C-termini of ARC into the intersubunit pockets in the alpha-rings, may trigger opening of the gate for substrate entry. Interconversion between the open-gate and close-gate conformations leads to a dynamic regulation of the 20S proteasome proteolysis activity. Its function is as follows. Component of the proteasome core, a large protease complex with broad specificity involved in protein degradation. The sequence is that of Proteasome subunit alpha from Renibacterium salmoninarum (strain ATCC 33209 / DSM 20767 / JCM 11484 / NBRC 15589 / NCIMB 2235).